A 234-amino-acid chain; its full sequence is Preflagellin peptidase (234 aa).

Position 1 (M1) is a topological domain, cytoplasmic. A helical transmembrane segment spans residues 2–18; that stretch reads INFIVGAIGLLIASIYD. Over 19-23 the chain is Extracellular; sequence LKSRE. Residues 24-46 traverse the membrane as a helical segment; the sequence is IEDYVWVSMVIFGLIYNGYLSFI. Over 47-49 the chain is Cytoplasmic; it reads SHD. A helical membrane pass occupies residues 50–72; sequence MLYVIQSIVGFIVCFFLGFFMFL. Residues 73–78 are Extracellular-facing; that stretch reads LGVGGG. Residues 79 to 89 traverse the membrane as a helical segment; that stretch reads DGKLIMGLGAL. The Cytoplasmic portion of the chain corresponds to 90–110; that stretch reads IPKYNMPIHTPLGAILNYLYL. The chain crosses the membrane as a helical span at residues 111–139; it reads PSFPIMVVINAMFFSITLPIIIFLRNVIR. The Extracellular portion of the chain corresponds to 140–205; that stretch reads GVKPKTKKEV…EEIWVTPAIP (66 aa). The helical transmembrane segment at 206-217 threads the bilayer; it reads FVVPIFLSYLLT. The Cytoplasmic segment spans residues 218 to 234; the sequence is SIIGDKIIGIFLSVFGL.

Belongs to the peptidase A24 family. Archaeal preflagellin peptidase subfamily.

The protein resides in the cell membrane. The enzyme catalyses Cleaves the signal peptide of 3 to 12 amino acids from the N-terminal of preflagellin, usually at Arg-Gly-|- or Lys-Gly-|-, to release flagellin.. Functionally, cleaves the N-terminal leader peptide from preflagellins. This is Preflagellin peptidase (flaK) from Methanocaldococcus jannaschii (strain ATCC 43067 / DSM 2661 / JAL-1 / JCM 10045 / NBRC 100440) (Methanococcus jannaschii).